Here is a 349-residue protein sequence, read N- to C-terminus: Decapping nuclease RAI1 (349 aa).

Glu-157 contributes to the a divalent metal cation binding site. Residue Glu-205 participates in substrate binding. The a divalent metal cation site is built by Asp-207, Glu-222, and Leu-223. Substrate is bound by residues Lys-224 and Gln-248.

It belongs to the DXO/Dom3Z family. In terms of assembly, interacts with RAT1; the interaction is direct, stabilizes RAT1 protein structure and stimulates its exoribonuclease activity. The interaction also stimulates RAI1 pyrophosphohydrolase activity, probably by recruiting it to mRNA substrates. A divalent metal cation serves as cofactor.

The protein localises to the nucleus. It catalyses the reaction a 5'-end NAD(+)-phospho-ribonucleoside in mRNA + H2O = a 5'-end phospho-ribonucleoside in mRNA + NAD(+) + H(+). The enzyme catalyses a 5'-end (N(7)-methyl 5'-triphosphoguanosine)-ribonucleoside-ribonucleotide in mRNA + H2O = a (N(7)-methyl 5'-triphosphoguanosine)-nucleoside + a 5'-end phospho-ribonucleoside in mRNA + H(+). It carries out the reaction a 5'-end triphospho-ribonucleoside in mRNA + H2O = a 5'-end phospho-ribonucleoside in mRNA + diphosphate + H(+). Functionally, decapping enzyme for NAD-capped RNAs: specifically hydrolyzes the nicotinamide adenine dinucleotide (NAD) cap from a subset of RNAs by removing the entire NAD moiety from the 5'-end of an NAD-capped RNA. The NAD-cap is present at the 5'-end of some RNAs and snoRNAs. In contrast to the canonical 5'-end N7 methylguanosine (m7G) cap, the NAD cap promotes mRNA decay. Also acts as a non-canonical decapping enzyme that removes the entire cap structure of m7G capped or incompletely capped RNAs. Has decapping activity toward incomplete 5'-end m7G cap mRNAs such as unmethylated 5'-end-capped RNA (cap0), while it has no activity toward 2'-O-ribose methylated m7G cap (cap1). Also possesses RNA 5'-pyrophosphohydrolase activity by hydrolyzing the 5'-end triphosphate to release pyrophosphates. Stimulates exoribonuclease activity of Rat1, allowing it to degrade RNAs with stable secondary structure more effectively. The chain is Decapping nuclease RAI1 (RAI1) from Yarrowia lipolytica (strain CLIB 122 / E 150) (Yeast).